A 234-amino-acid chain; its full sequence is MTLLYEGKAKRIFSTNQENELRVEYKDEVTAGNGAKKDTMAGKGRLNNQITSIIFKYLQENGIESHFIKQLSETEQLVKPVKIIPLEVVVRNIASGSITKRLGFENGEVFREPLVEFFYKNDALNDPLITDDHVKLLNIASDEDIEILKSKALKINNVLKQLMDAMNLKLVDFKIEFGKTETGQILLADEISPDTCRIWDKATNANFDKDVYRNNTGSLIETYQIFLNKLEDLK.

The protein belongs to the SAICAR synthetase family.

It catalyses the reaction 5-amino-1-(5-phospho-D-ribosyl)imidazole-4-carboxylate + L-aspartate + ATP = (2S)-2-[5-amino-1-(5-phospho-beta-D-ribosyl)imidazole-4-carboxamido]succinate + ADP + phosphate + 2 H(+). The protein operates within purine metabolism; IMP biosynthesis via de novo pathway; 5-amino-1-(5-phospho-D-ribosyl)imidazole-4-carboxamide from 5-amino-1-(5-phospho-D-ribosyl)imidazole-4-carboxylate: step 1/2. This Staphylococcus aureus (strain COL) protein is Phosphoribosylaminoimidazole-succinocarboxamide synthase.